Here is a 343-residue protein sequence, read N- to C-terminus: UDP-glucuronic acid decarboxylase 6 (343 aa).

Residues 1-22 form a disordered region; it reads MASNSSNGTTTTKPPPMPSPLR. An N-acetylalanine modification is found at alanine 2. Position 62–87 (62–87) interacts with NAD(+); the sequence is DNYFTGSKDNLKKWIGHPRFELIRHD. Arginine 171 serves as a coordination point for substrate. The active-site Proton acceptor is tyrosine 174. 174 to 178 is an NAD(+) binding site; it reads YDEGK. Asparagine 203 provides a ligand contact to substrate. Arginine 215 contacts NAD(+). Substrate is bound by residues 216–220, 233–240, and 300–304; these read VVSNF, QKPGTQTR, and DPRQR.

The protein belongs to the NAD(P)-dependent epimerase/dehydratase family. UDP-glucuronic acid decarboxylase subfamily. Requires NAD(+) as cofactor.

The protein resides in the cytoplasm. The enzyme catalyses UDP-alpha-D-glucuronate + H(+) = UDP-alpha-D-xylose + CO2. The protein operates within nucleotide-sugar biosynthesis; UDP-alpha-D-xylose biosynthesis; UDP-alpha-D-xylose from UDP-alpha-D-glucuronate: step 1/1. Its function is as follows. Catalyzes the NAD-dependent decarboxylation of UDP-glucuronic acid to UDP-xylose. Necessary for the biosynthesis of the core tetrasaccharide in glycosaminoglycan biosynthesis. The chain is UDP-glucuronic acid decarboxylase 6 (UXS6) from Arabidopsis thaliana (Mouse-ear cress).